Reading from the N-terminus, the 485-residue chain is Glutamyl-tRNA(Gln) amidotransferase subunit A (485 aa).

Residues Lys79 and Ser154 each act as charge relay system in the active site. Residue Ser178 is the Acyl-ester intermediate of the active site.

Belongs to the amidase family. GatA subfamily. As to quaternary structure, heterotrimer of A, B and C subunits.

The enzyme catalyses L-glutamyl-tRNA(Gln) + L-glutamine + ATP + H2O = L-glutaminyl-tRNA(Gln) + L-glutamate + ADP + phosphate + H(+). Allows the formation of correctly charged Gln-tRNA(Gln) through the transamidation of misacylated Glu-tRNA(Gln) in organisms which lack glutaminyl-tRNA synthetase. The reaction takes place in the presence of glutamine and ATP through an activated gamma-phospho-Glu-tRNA(Gln). The chain is Glutamyl-tRNA(Gln) amidotransferase subunit A from Desulforamulus reducens (strain ATCC BAA-1160 / DSM 100696 / MI-1) (Desulfotomaculum reducens).